The sequence spans 334 residues: Probable GTP 3',8-cyclase (334 aa).

Positions 24–256 (PYGRKVTGLR…RKKYIIDGVE (233 aa)) constitute a Radical SAM core domain. Residue Arg-33 participates in GTP binding. Cys-40 and Cys-44 together coordinate [4Fe-4S] cluster. Position 46 (Tyr-46) interacts with S-adenosyl-L-methionine. Cys-47 is a binding site for [4Fe-4S] cluster. Residue Lys-85 coordinates GTP. Residue Gly-89 participates in S-adenosyl-L-methionine binding. Residue Thr-113 coordinates GTP. Position 137 (Ser-137) interacts with S-adenosyl-L-methionine. Lys-176 serves as a coordination point for GTP. Residues Cys-269 and Cys-272 each contribute to the [4Fe-4S] cluster site. 274 to 276 (RLR) contacts GTP. [4Fe-4S] cluster is bound at residue Cys-286.

The protein belongs to the radical SAM superfamily. MoaA family. Requires [4Fe-4S] cluster as cofactor.

The enzyme catalyses GTP + AH2 + S-adenosyl-L-methionine = (8S)-3',8-cyclo-7,8-dihydroguanosine 5'-triphosphate + 5'-deoxyadenosine + L-methionine + A + H(+). It functions in the pathway cofactor biosynthesis; molybdopterin biosynthesis. Functionally, catalyzes the cyclization of GTP to (8S)-3',8-cyclo-7,8-dihydroguanosine 5'-triphosphate. The sequence is that of Probable GTP 3',8-cyclase from Methanosarcina acetivorans (strain ATCC 35395 / DSM 2834 / JCM 12185 / C2A).